Here is an 860-residue protein sequence, read N- to C-terminus: Eukaryotic translation initiation factor 3 subunit C (860 aa).

Positions 1–76 (MSRFFYGNDS…SEESEEEDVV (76 aa)) are disordered. Acidic residues predominate over residues 10–51 (SDSDSSGSDEEELYSDEEVEQSEEESSEEDASSEEESSEDED). Residues 599–773 (FHMHINLELL…DAIVFRKGVE (175 aa)) enclose the PCI domain. The disordered stretch occupies residues 812–860 (RDQGAGARGGRGPRGGGQARGGPRLPGGQQRRPGGQQFGGGALGGAIKA). The segment covering 817–831 (GARGGRGPRGGGQAR) has biased composition (gly residues). A compositionally biased stretch (low complexity) spans 832-846 (GGPRLPGGQQRRPGG). The span at 847–860 (QQFGGGALGGAIKA) shows a compositional bias: gly residues.

This sequence belongs to the eIF-3 subunit C family. As to quaternary structure, component of the eukaryotic translation initiation factor 3 (eIF-3) complex.

Its subcellular location is the cytoplasm. Component of the eukaryotic translation initiation factor 3 (eIF-3) complex, which is involved in protein synthesis of a specialized repertoire of mRNAs and, together with other initiation factors, stimulates binding of mRNA and methionyl-tRNAi to the 40S ribosome. The eIF-3 complex specifically targets and initiates translation of a subset of mRNAs involved in cell proliferation. The polypeptide is Eukaryotic translation initiation factor 3 subunit C (nip1) (Emericella nidulans (strain FGSC A4 / ATCC 38163 / CBS 112.46 / NRRL 194 / M139) (Aspergillus nidulans)).